The following is a 294-amino-acid chain: RAB7A-interacting MON1-CCZ1 complex subunit 1 (294 aa).

An N-acetylalanine modification is found at alanine 2.

It belongs to the RIMOC1 family. Interacts with the MON1A-CCZ1B complex. Interacts with GDP-bound RAB7A and promotes its interaction with the MON1A-CCZ1B complex.

Its subcellular location is the cytoplasm. The protein resides in the cytosol. Its function is as follows. Plays an important role in the removal of damaged mitochondria via mitophagy by controlling the stability and localization of RAB7A. Required for the recruitment of RAB7A and ATG9A vesicles to damaged mitochondria and promotes the stability of RAB7A by inhibiting its proteasomal degradation during mitophagy. This is RAB7A-interacting MON1-CCZ1 complex subunit 1 from Mus musculus (Mouse).